Reading from the N-terminus, the 221-residue chain is Imidazoleglycerol-phosphate dehydratase (221 aa).

This sequence belongs to the imidazoleglycerol-phosphate dehydratase family.

The catalysed reaction is D-erythro-1-(imidazol-4-yl)glycerol 3-phosphate = 3-(imidazol-4-yl)-2-oxopropyl phosphate + H2O. Its pathway is amino-acid biosynthesis; L-histidine biosynthesis; L-histidine from 5-phospho-alpha-D-ribose 1-diphosphate: step 6/9. The polypeptide is Imidazoleglycerol-phosphate dehydratase (HIS3) (Kluyveromyces lactis (strain ATCC 8585 / CBS 2359 / DSM 70799 / NBRC 1267 / NRRL Y-1140 / WM37) (Yeast)).